The primary structure comprises 1047 residues: MKPPQYRQVPAQVDLPALEHAVLDFWREQKIFAKSLEQSEGRPEWVFYEGPPTANGMPGAHHIEARVFKDVFPRFRTMRGYHVARKAGWDCHGLPVELAVEKELGFSGKQDIEAYGIAEFNAKCRESVTRHTDAFEELTSRMGYWTDLNDPYRTMDPEYIESVWWSLKEIFNKGLLVQDYRVAPWCPQDETGLSDHELAQGYETIVDPSVYVRFPLTSGPLAGRAALLVWTTTPWTLVSNTAVAAHPDVTYVVATNGEEKLVVAEPLVEKALGEGWETTGETFTGAEMERWTYQRPFELVEFPAPAHYVVNAEYVTTEDGTGLVHQSPAFGEDDLKVCREYGLPVVNPVRTNGTFEEDVPLVGGVFFKKADEKLTEDLQNRGLLFKHIPYEHSYPHCWRCHTALLYYAQPSWYIRTTAVKDRLLQENEKTNWFPESVKHGRFGDWLNNNVDWALSRSRFWGTPLPLWTCEEGHLTCVGSRAELSELTGTDQSNLDPHRPFIDAVTFACPQDGCGRTATRVPEVIDAWYDSGSMPFAQWGYPYKNKELFESRYPAQFISEAIDQTRGWFYTLMAVGTLVFDKSSYENVVCLGHILAEDGRKMSKHLGNILQPIPLMDQHGADAVRWFMAAGGSPWAARRVGHGTIQEVVRKTLLTYWNTVAFQALYARTSGWAPSEADPAPADRPVLDRWLLSELHALTDQVTQALESYDTQRAGKLLSAFVDDLSNWYVRRSRRRFWQGDKAALRTLHEVVETVTRLMAPLTPFITERVWQDLVFPVTPGAPESVHLASWPEADLSAIDPELSKQMVLVRRLVELGRATRAESGVKTRQPLSRALVAVAGFETLDRELHAQITEELNVTSLAALSEVGGSLVDTTAKANFRALGKRFGKGVQAVAKAVAGADAAALSLALREGTASVEVDGETVTLAPDEVIITETPREGWSVASDSGATVALDLEITEELRQAGLARDAIRLIQEARKNSGLDVADRIALRWTSTDPEVIAALSEHSELIADEVLATDFAQGEADDTYGEPFTDESLSLTFRLRKA.

A 'HIGH' region motif is present at residues 52 to 62 (PTANGMPGAHH). Positions 600-604 (KMSKH) match the 'KMSKS' region motif. K603 serves as a coordination point for ATP.

The protein belongs to the class-I aminoacyl-tRNA synthetase family. IleS type 2 subfamily. In terms of assembly, monomer. The cofactor is Zn(2+).

The protein resides in the cytoplasm. The catalysed reaction is tRNA(Ile) + L-isoleucine + ATP = L-isoleucyl-tRNA(Ile) + AMP + diphosphate. In terms of biological role, catalyzes the attachment of isoleucine to tRNA(Ile). As IleRS can inadvertently accommodate and process structurally similar amino acids such as valine, to avoid such errors it has two additional distinct tRNA(Ile)-dependent editing activities. One activity is designated as 'pretransfer' editing and involves the hydrolysis of activated Val-AMP. The other activity is designated 'posttransfer' editing and involves deacylation of mischarged Val-tRNA(Ile). The chain is Isoleucine--tRNA ligase from Streptomyces avermitilis (strain ATCC 31267 / DSM 46492 / JCM 5070 / NBRC 14893 / NCIMB 12804 / NRRL 8165 / MA-4680).